The following is a 153-amino-acid chain: Probable inactive ribonuclease-like protein 13 (153 aa).

An N-terminal signal peptide occupies residues 1-22 (MASDAASLLVLQLVLQPTLVTG).

Belongs to the pancreatic ribonuclease family.

It localises to the secreted. In terms of biological role, does not exhibit any ribonuclease activity. This Rattus norvegicus (Rat) protein is Probable inactive ribonuclease-like protein 13 (Rnase13).